The sequence spans 215 residues: 3-demethoxyubiquinol 3-hydroxylase (215 aa).

6 residues coordinate Fe cation: Glu64, Glu94, His97, Glu146, Glu178, and His181.

The protein belongs to the COQ7 family. It depends on Fe cation as a cofactor.

It is found in the cell membrane. The catalysed reaction is a 5-methoxy-2-methyl-3-(all-trans-polyprenyl)benzene-1,4-diol + AH2 + O2 = a 3-demethylubiquinol + A + H2O. The protein operates within cofactor biosynthesis; ubiquinone biosynthesis. Its function is as follows. Catalyzes the hydroxylation of 2-nonaprenyl-3-methyl-6-methoxy-1,4-benzoquinol during ubiquinone biosynthesis. The chain is 3-demethoxyubiquinol 3-hydroxylase from Pseudomonas putida (strain GB-1).